Consider the following 300-residue polypeptide: tRNA dimethylallyltransferase 1 (300 aa).

10–17 (GPTGVGKT) contacts ATP. 12-17 (TGVGKT) lines the substrate pocket. Residues 35 to 38 (DSRQ) are interaction with substrate tRNA.

The protein belongs to the IPP transferase family. In terms of assembly, monomer. The cofactor is Mg(2+).

The enzyme catalyses adenosine(37) in tRNA + dimethylallyl diphosphate = N(6)-dimethylallyladenosine(37) in tRNA + diphosphate. In terms of biological role, catalyzes the transfer of a dimethylallyl group onto the adenine at position 37 in tRNAs that read codons beginning with uridine, leading to the formation of N6-(dimethylallyl)adenosine (i(6)A). This Phocaeicola vulgatus (strain ATCC 8482 / DSM 1447 / JCM 5826 / CCUG 4940 / NBRC 14291 / NCTC 11154) (Bacteroides vulgatus) protein is tRNA dimethylallyltransferase 1.